The following is a 740-amino-acid chain: MSENQVLIREISLGGRTLTLETGRMAKQASGAVLVTYGETVVLVTATVAKNTRDIDFFPLTVDYEERLYAVGKIPGGFIKREGRPSEKAILSGRLIDRPIRPLFPKHMRNEVQVVATVMSVDQDNAPEIAAMIGASAALHISKIPLKKPIGGVIVGRVDGQFVINPMVRQAENSDMHLVVAGTDDAVMMVEAGAKEVPESEMLEGIMYGHEKVKEIVKFIEDFRTEALGMGLAFEKMEIPEPQFDSNMSEAILTIAEEAIREAVLHCSREKLTKKQREVYMDEVMSGLQEKFLEQFPENPKEVTMLIEKAEKKVVRRIITHDKLRIDGRAIDEIRPISVEVGVLPRTHGTGLFTRGQTQILSVATLGSISEEQILDGLGVEESKRYMHHYNFPPFSTGETKPMRSPGRREIGHGALAERALEPMIPPEEVFPYTIRVVSEAIESNGSTSMGSVCGSTLSLMDAGVPLKAPVAGVAMGLIMEEDQFTVLTDIQGLEDHLGDMDFKVAGSANGVTALQMDIKIPGITREVFEQALEQAHRGRMFILGKMLEVLSTPRAEISVHAPAIIRTSIHPDKIRDIIGPGGKIIKKLVEETGADIDIEDDGRVFIAAVDREKGKRALEIIQSITAEVQVGKLYNGKVTRVTDFGCFVEVIPGVMGLPGKEGLVHISQLAFQRVEKTEDIVKEGEVIAVKAIGYDQQGRLKLSKKEAMRDMGLAPAESTSEQPEKRERRPFSRPKATKE.

Mg(2+) contacts are provided by aspartate 496 and aspartate 502. Residues 563-622 (PAIIRTSIHPDKIRDIIGPGGKIIKKLVEETGADIDIEDDGRVFIAAVDREKGKRALEII) enclose the KH domain. Positions 632 to 706 (GKLYNGKVTR…QQGRLKLSKK (75 aa)) constitute an S1 motif domain. The disordered stretch occupies residues 707–740 (EAMRDMGLAPAESTSEQPEKRERRPFSRPKATKE). A compositionally biased stretch (basic and acidic residues) spans 723 to 740 (QPEKRERRPFSRPKATKE).

It belongs to the polyribonucleotide nucleotidyltransferase family. Mg(2+) is required as a cofactor.

The protein localises to the cytoplasm. It carries out the reaction RNA(n+1) + phosphate = RNA(n) + a ribonucleoside 5'-diphosphate. In terms of biological role, involved in mRNA degradation. Catalyzes the phosphorolysis of single-stranded polyribonucleotides processively in the 3'- to 5'-direction. The chain is Polyribonucleotide nucleotidyltransferase from Desulforamulus reducens (strain ATCC BAA-1160 / DSM 100696 / MI-1) (Desulfotomaculum reducens).